We begin with the raw amino-acid sequence, 410 residues long: Angiopoietin-related protein 4 (410 aa).

An N-terminal signal peptide occupies residues 1–23 (MRCAPTAGAALVLCAATAGLLSA). Positions 79–101 (ACQGPKGKDAPFKDSEDRVPEGQ) are disordered. A compositionally biased stretch (basic and acidic residues) spans 84–98 (KGKDAPFKDSEDRVP). Residues 104 to 152 (ETLQSLQTQLKAQNSKIQQLFQKVAQQQRYLSKQNLRIQNLQSQIDLLA) adopt a coiled-coil conformation. Residue Asn181 is glycosylated (N-linked (GlcNAc...) asparagine). Residues 183–405 (THLHRPPRDC…ATTLLIQPME (223 aa)) enclose the Fibrinogen C-terminal domain. Cysteines 192 and 220 form a disulfide. N-linked (GlcNAc...) asparagine glycosylation is found at Asn236 and Asn242. A disulfide bond links Cys345 and Cys358.

Homooligomer; disulfide-linked via Cys residues in the N-terminal part of the protein. The homooligomer undergoes proteolytic processing to release the ANGPTL4 C-terminal chain, which circulates as a monomer. The homooligomer unprocessed form is able to interact with the extracellular matrix. N-glycosylated. In terms of processing, forms disulfide-linked dimers and tetramers. Post-translationally, cleaved into a smaller N-terminal chain and a larger chain that contains the fibrinogen C-terminal domain; both cleaved and uncleaved forms are detected in the extracellular space. The cleaved form is not present within the cell. In terms of tissue distribution, detected in liver and kidney. Predominantly expressed in adipose tissue and is strongly up-regulated by fasting in white adipose tissue and liver. More abundant in areas of lower flow stress in the inner curvature compared to the outer curvature regions of the aorta (at protein level).

It is found in the secreted. The protein resides in the extracellular space. Its subcellular location is the extracellular matrix. Mediates inactivation of the lipoprotein lipase LPL, and thereby plays a role in the regulation of triglyceride clearance from the blood serum and in lipid metabolism. May also play a role in regulating glucose homeostasis and insulin sensitivity. Inhibits proliferation, migration, and tubule formation of endothelial cells and reduces vascular leakage. Upon heterologous expression, inhibits the adhesion of endothelial cell to the extracellular matrix (ECM), and inhibits the reorganization of the actin cytoskeleton, formation of actin stress fibers and focal adhesions in endothelial cells that have adhered to ANGPTL4-containing ECM (in vitro). Depending on context, may modulate tumor-related angiogenesis. In terms of biological role, mediates inactivation of the lipoprotein lipase LPL, and thereby plays an important role in the regulation of triglyceride clearance from the blood serum and in lipid metabolism. Has higher activity in LPL inactivation than the uncleaved protein. The sequence is that of Angiopoietin-related protein 4 (Angptl4) from Mus musculus (Mouse).